The primary structure comprises 335 residues: Probable cytosolic iron-sulfur protein assembly protein Ciao1 (335 aa).

7 WD repeats span residues 12 to 51 (GHKG…WSTK), 57 to 96 (GHKR…FECN), 101 to 140 (GHEN…EFEC), 146 to 185 (PHTQ…SDWD), 192 to 231 (SHTS…NDAG), 250 to 289 (QHSR…KRDE), and 301 to 335 (AHEQ…KMLD).

The protein belongs to the WD repeat CIA1 family.

Functionally, essential component of the cytosolic iron-sulfur (Fe/S) protein assembly machinery. Required for the maturation of extramitochondrial Fe/S proteins. The polypeptide is Probable cytosolic iron-sulfur protein assembly protein Ciao1 (Drosophila willistoni (Fruit fly)).